A 600-amino-acid chain; its full sequence is Pyranose dehydrogenase 3 (600 aa).

The N-terminal stretch at 1 to 25 (MLPRVARLNTHLVSLALLGFQITYG) is a signal peptide. 2 N-linked (GlcNAc...) asparagine glycosylation sites follow: Asn99 and Asn114. His127 carries the post-translational modification Tele-8alpha-FAD histidine. N-linked (GlcNAc...) asparagine glycosylation is found at Asn173, Asn199, Asn275, Asn342, Asn399, and Asn507. The active-site Proton acceptor is His535. An N-linked (GlcNAc...) asparagine glycan is attached at Asn546. His579 is an active-site residue.

It belongs to the GMC oxidoreductase family. As to quaternary structure, monomer. Requires FAD as cofactor. N-glycosylated.

It is found in the secreted. The enzyme catalyses pyranose + acceptor = pyranos-2-ulose + reduced acceptor.. The catalysed reaction is pyranose + acceptor = pyranos-3-ulose + reduced acceptor.. It catalyses the reaction pyranose + acceptor = pyranos-2,3-diulose + reduced acceptor.. It carries out the reaction a pyranoside + acceptor = a pyranosid-3-ulose + reduced acceptor.. The enzyme catalyses a pyranoside + acceptor = a pyranosid-3,4-diulose + reduced acceptor.. In terms of biological role, catalyzes the single-oxidation or sequential double oxidation reaction of carbohydrates primarily at carbon-2 and/or carbon-3 with the concomitant reduction of the flavin. The enzyme exhibits a broad sugar substrate specificity, oxidizing different aldopyranoses to the corresponding C-1, C-2, C-3 or C-1,2, C-2,3 and C-3,4 (di)dehydro sugars with substrate-specific regioselectivity. Accepts only a narrow range of electron acceptors such as substituted benzoquinones and complexed metal ions and reacts extremely slowly with O(2) as acceptor. May play a role in the natural recycling of plant matter by oxidizing all major monosaccharides in lignocellulose and by reducing quinone compounds or reactive radical species generated during lignin depolymerization. The protein is Pyranose dehydrogenase 3 of Leucoagaricus meleagris (Western flat-topped agaric).